The following is a 633-amino-acid chain: Pescadillo homolog (633 aa).

One can recognise a BRCT domain in the interval 321–414; sequence RLRTLFKGLK…QLLPTNKYFL (94 aa). 2 disordered regions span residues 450 to 470 and 490 to 567; these read HAQS…DTVE and KKYG…LQAR. Ser453 and Ser457 each carry phosphoserine. Composition is skewed to acidic residues over residues 454–470 and 498–526; these read EDES…DTVE and VNED…EELD. The span at 527 to 538 shows a compositional bias: basic and acidic residues; it reads EKEKRLLEEKQK. A compositionally biased stretch (basic residues) spans 545-554; sequence KVHKVNKRQV. Basic and acidic residues predominate over residues 555-564; it reads HKAEVDEHRL. Residues 593–626 are a coiled coil; it reads LLRKKRRTIETDAKEAKKLAKREARKAAAAAAAA.

It belongs to the pescadillo family.

It localises to the nucleus. The protein resides in the nucleolus. Its subcellular location is the nucleoplasm. In terms of biological role, required for maturation of ribosomal RNAs and formation of the large ribosomal subunit. This is Pescadillo homolog from Drosophila virilis (Fruit fly).